The following is a 422-amino-acid chain: Dihydroorotase (422 aa).

Residues histidine 53 and histidine 55 each contribute to the Zn(2+) site. Substrate-binding positions include 55 to 57 and asparagine 87; that span reads HFR. Glutamate 138, histidine 172, histidine 223, and aspartate 291 together coordinate Zn(2+). Residue aspartate 291 is part of the active site. Residue histidine 295 coordinates substrate.

It belongs to the metallo-dependent hydrolases superfamily. DHOase family. Class I DHOase subfamily. Zn(2+) is required as a cofactor.

The enzyme catalyses (S)-dihydroorotate + H2O = N-carbamoyl-L-aspartate + H(+). It functions in the pathway pyrimidine metabolism; UMP biosynthesis via de novo pathway; (S)-dihydroorotate from bicarbonate: step 3/3. Its function is as follows. Catalyzes the reversible cyclization of carbamoyl aspartate to dihydroorotate. In Halobacterium salinarum (strain ATCC 700922 / JCM 11081 / NRC-1) (Halobacterium halobium), this protein is Dihydroorotase.